The primary structure comprises 261 residues: 14-3-3-like protein A (261 aa).

This sequence belongs to the 14-3-3 family.

The sequence is that of 14-3-3-like protein A from Vicia faba (Broad bean).